The following is a 181-amino-acid chain: Large ribosomal subunit protein uL5c (181 aa).

This sequence belongs to the universal ribosomal protein uL5 family. As to quaternary structure, part of the 50S ribosomal subunit; contacts the 5S rRNA.

It is found in the plastid. The protein localises to the chloroplast. Its function is as follows. Binds 5S rRNA, forms part of the central protuberance of the 50S subunit. This is Large ribosomal subunit protein uL5c (rpl5) from Porphyra purpurea (Red seaweed).